A 75-amino-acid chain; its full sequence is Exodeoxyribonuclease 7 small subunit (75 aa).

The protein belongs to the XseB family. As to quaternary structure, heterooligomer composed of large and small subunits.

Its subcellular location is the cytoplasm. It catalyses the reaction Exonucleolytic cleavage in either 5'- to 3'- or 3'- to 5'-direction to yield nucleoside 5'-phosphates.. Bidirectionally degrades single-stranded DNA into large acid-insoluble oligonucleotides, which are then degraded further into small acid-soluble oligonucleotides. The protein is Exodeoxyribonuclease 7 small subunit of Pelobacter propionicus (strain DSM 2379 / NBRC 103807 / OttBd1).